A 499-amino-acid chain; its full sequence is Dual specificity protein kinase CLK2 (499 aa).

The interval 1–67 (MPHPRRYHSS…SYDDRSSDRR (67 aa)) is disordered. Basic and acidic residues predominate over residues 8 to 21 (HSSERGSRGSYREH). Over residues 22-33 (YRSRKHKRRRSR) the composition is skewed to basic residues. At Ser34 the chain carries Phosphoserine; by PKB/AKT1. Residues 47-67 (REDSYHVRSRSSYDDRSSDRR) are compositionally biased toward basic and acidic residues. At Ser98 the chain carries Phosphoserine. Tyr99 carries the phosphotyrosine; by autocatalysis modification. The segment at 101 to 143 (YQRENSSYRSQRSSRRKHRRRRRRSRTFSRSSSQHSSRRAKSV) is disordered. Basic residues predominate over residues 112–127 (RSSRRKHRRRRRRSRT). Thr127 bears the Phosphothreonine; by PKB/AKT1 mark. Position 142 is a phosphoserine; by autocatalysis (Ser142). A Phosphotyrosine modification is found at Tyr153. Residues 163–479 (YEIVSTLGEG…LGEALQHPFF (317 aa)) form the Protein kinase domain. Residues 169-177 (LGEGTFGRV) and Lys193 contribute to the ATP site. Catalysis depends on Asp290, which acts as the Proton acceptor. Thr344 carries the phosphothreonine; by PKB/AKT2 modification.

Belongs to the protein kinase superfamily. CMGC Ser/Thr protein kinase family. Lammer subfamily. In terms of assembly, interacts with RBMX. Interacts with AKT1 and UBL5. Post-translationally, autophosphorylates on all three types of residues. Phosphorylation on Ser-34 and Thr-127 by AKT1 is induced by ionizing radiation or insulin. Phosphorylation plays a critical role in cell proliferation following low dose radiation and prevents cell death following high dose radiation. Phosphorylation at Thr-344 by PKB/AKT2 induces its kinase activity which is required for its stability. The phosphorylation status at Ser-142 influences its subnuclear localization; inhibition of phosphorylation at Ser-142 results in accumulation in the nuclear speckle. In terms of tissue distribution, endothelial cells. Expressed in androgen-dependent prostate cancer cells.

The protein localises to the nucleus. It localises to the nucleus speckle. The catalysed reaction is L-seryl-[protein] + ATP = O-phospho-L-seryl-[protein] + ADP + H(+). It catalyses the reaction L-threonyl-[protein] + ATP = O-phospho-L-threonyl-[protein] + ADP + H(+). It carries out the reaction L-tyrosyl-[protein] + ATP = O-phospho-L-tyrosyl-[protein] + ADP + H(+). Its activity is regulated as follows. 5,6-dichloro-1-b-D-ribofuranosylbenzimidazole (DRB) inhibits autophosphorylation. TG003 inhibits its kinase activity and affects the regulation of alternative splicing mediated by phosphorylation of SR proteins. Functionally, dual specificity kinase acting on both serine/threonine and tyrosine-containing substrates. Phosphorylates serine- and arginine-rich (SR) proteins of the spliceosomal complex. May be a constituent of a network of regulatory mechanisms that enable SR proteins to control RNA splicing and can cause redistribution of SR proteins from speckles to a diffuse nucleoplasmic distribution. Acts as a suppressor of hepatic gluconeogenesis and glucose output by repressing PPARGC1A transcriptional activity on gluconeogenic genes via its phosphorylation. Phosphorylates PPP2R5B thereby stimulating the assembly of PP2A phosphatase with the PPP2R5B-AKT1 complex leading to dephosphorylation of AKT1. Phosphorylates: PTPN1, SRSF1 and SRSF3. Regulates the alternative splicing of tissue factor (F3) pre-mRNA in endothelial cells. Phosphorylates PAGE4 at several serine and threonine residues and this phosphorylation attenuates the ability of PAGE4 to potentiate the transcriptional activator activity of JUN. The sequence is that of Dual specificity protein kinase CLK2 (CLK2) from Homo sapiens (Human).